A 234-amino-acid polypeptide reads, in one-letter code: Ubiquinone biosynthesis O-methyltransferase (234 aa).

The S-adenosyl-L-methionine site is built by arginine 39, glycine 59, aspartate 80, and methionine 124.

It belongs to the methyltransferase superfamily. UbiG/COQ3 family.

It catalyses the reaction a 3-demethylubiquinol + S-adenosyl-L-methionine = a ubiquinol + S-adenosyl-L-homocysteine + H(+). The enzyme catalyses a 3-(all-trans-polyprenyl)benzene-1,2-diol + S-adenosyl-L-methionine = a 2-methoxy-6-(all-trans-polyprenyl)phenol + S-adenosyl-L-homocysteine + H(+). The protein operates within cofactor biosynthesis; ubiquinone biosynthesis. Its function is as follows. O-methyltransferase that catalyzes the 2 O-methylation steps in the ubiquinone biosynthetic pathway. This chain is Ubiquinone biosynthesis O-methyltransferase, found in Aliivibrio fischeri (strain MJ11) (Vibrio fischeri).